A 252-amino-acid chain; its full sequence is Phosphate import ATP-binding protein PstB 1 (252 aa).

One can recognise an ABC transporter domain in the interval 6–247 (LQVSDLSVYY…PQHKETEDYI (242 aa)). 38–45 (GPSGSGKS) lines the ATP pocket.

This sequence belongs to the ABC transporter superfamily. Phosphate importer (TC 3.A.1.7) family. The complex is composed of two ATP-binding proteins (PstB), two transmembrane proteins (PstC and PstA) and a solute-binding protein (PstS).

It is found in the cell membrane. It carries out the reaction phosphate(out) + ATP + H2O = ADP + 2 phosphate(in) + H(+). Functionally, part of the ABC transporter complex PstSACB involved in phosphate import. Responsible for energy coupling to the transport system. This is Phosphate import ATP-binding protein PstB 1 from Streptococcus pneumoniae (strain ATCC BAA-255 / R6).